Reading from the N-terminus, the 152-residue chain is Transcriptional regulator MraZ (152 aa).

2 consecutive SpoVT-AbrB domains span residues 5-52 (ASAI…PIHE) and 81-124 (AHEV…DEQA).

The protein belongs to the MraZ family. As to quaternary structure, forms oligomers.

It is found in the cytoplasm. The protein resides in the nucleoid. The protein is Transcriptional regulator MraZ of Shewanella sp. (strain ANA-3).